We begin with the raw amino-acid sequence, 878 residues long: AP-2 complex subunit alpha (878 aa).

It belongs to the adaptor complexes large subunit family. In terms of assembly, adaptor protein complex 2 (AP-2) is a heterotetramer composed of two large adaptins (alpha-type subunit apl3 and beta-type subunit apl1), a medium chain (mu-type subunit apm4) and a small adaptin (sigma-type subunit aps2).

It localises to the cell membrane. It is found in the membrane. The protein resides in the coated pit. Functionally, adaptins are components of the adaptor complexes which link clathrin to receptors in coated vesicles. Clathrin-associated protein complexes are believed to interact with the cytoplasmic tails of membrane proteins, leading to their selection and concentration. Alpha adaptin is a subunit of the plasma membrane adaptor. This chain is AP-2 complex subunit alpha (apl3), found in Schizosaccharomyces pombe (strain 972 / ATCC 24843) (Fission yeast).